A 129-amino-acid polypeptide reads, in one-letter code: F(420)H(2) dehydrogenase subunit A (129 aa).

3 helical membrane-spanning segments follow: residues 9 to 29, 64 to 84, and 95 to 115; these read IIDS…MPPM, FNVE…EVLF, and HGIT…LLFG.

Belongs to the complex I subunit 3 family. In terms of assembly, the FPO complex is composed of at least 13 different subunits. FpoA, FpoH, FpoJ, FpoK, FpoL, FpoM and FpoN proteins constitute the membrane sector of the complex.

The protein localises to the cell membrane. The enzyme catalyses methanophenazine + reduced coenzyme F420-(gamma-L-Glu)(n) = dihydromethanophenazine + oxidized coenzyme F420-(gamma-L-Glu)(n) + H(+). Component of the F(420)H(2) dehydrogenase (FPO complex) which is part of the energy-conserving F(420)H(2):heterodisulfide oxidoreductase system. The membrane-bound electron transfer system of the complex plays an important role in the metabolism of methylotrophic methanogens when the organisms grow on methanol or methylamines. Catalyzes the oxidation of methanophenazine to dihydromethanophenazine. It shuttles electrons from F(420)H(2), via FAD and iron-sulfur (Fe-S) centers, to methanophenazine (an electron carrier in the membrane). It couples the redox reaction to proton translocation (for every two electrons transferred, two hydrogen ions are translocated across the cytoplasmic membrane), and thus conserves the redox energy in a proton gradient. It also catalyzes the oxidation of F(420)H(2) with quinones such as 2,3-dimethyl-1,4-naphthoquinone, 2-methyl-1,4-naphthoquinone and tetramethyl-p-benzoquinone. The protein is F(420)H(2) dehydrogenase subunit A (fpoA) of Methanosarcina mazei (strain ATCC BAA-159 / DSM 3647 / Goe1 / Go1 / JCM 11833 / OCM 88) (Methanosarcina frisia).